The sequence spans 558 residues: Dihydroxy-acid dehydratase (558 aa).

D78 lines the Mg(2+) pocket. [2Fe-2S] cluster is bound at residue C119. D120 and K121 together coordinate Mg(2+). The residue at position 121 (K121) is an N6-carboxylysine. Position 191 (C191) interacts with [2Fe-2S] cluster. Residue E443 coordinates Mg(2+). Residue S469 is the Proton acceptor of the active site.

This sequence belongs to the IlvD/Edd family. Homodimer. It depends on [2Fe-2S] cluster as a cofactor. Mg(2+) serves as cofactor.

It carries out the reaction (2R)-2,3-dihydroxy-3-methylbutanoate = 3-methyl-2-oxobutanoate + H2O. The enzyme catalyses (2R,3R)-2,3-dihydroxy-3-methylpentanoate = (S)-3-methyl-2-oxopentanoate + H2O. The protein operates within amino-acid biosynthesis; L-isoleucine biosynthesis; L-isoleucine from 2-oxobutanoate: step 3/4. It participates in amino-acid biosynthesis; L-valine biosynthesis; L-valine from pyruvate: step 3/4. Its function is as follows. Functions in the biosynthesis of branched-chain amino acids. Catalyzes the dehydration of (2R,3R)-2,3-dihydroxy-3-methylpentanoate (2,3-dihydroxy-3-methylvalerate) into 2-oxo-3-methylpentanoate (2-oxo-3-methylvalerate) and of (2R)-2,3-dihydroxy-3-methylbutanoate (2,3-dihydroxyisovalerate) into 2-oxo-3-methylbutanoate (2-oxoisovalerate), the penultimate precursor to L-isoleucine and L-valine, respectively. The chain is Dihydroxy-acid dehydratase from Solidesulfovibrio magneticus (strain ATCC 700980 / DSM 13731 / RS-1) (Desulfovibrio magneticus).